The primary structure comprises 296 residues: NAD kinase (296 aa).

Asp78 serves as the catalytic Proton acceptor. NAD(+) contacts are provided by residues 78–79 (DG), 152–153 (ND), Arg180, Asp182, and Gln251.

It belongs to the NAD kinase family. A divalent metal cation serves as cofactor.

The protein localises to the cytoplasm. It carries out the reaction NAD(+) + ATP = ADP + NADP(+) + H(+). Its function is as follows. Involved in the regulation of the intracellular balance of NAD and NADP, and is a key enzyme in the biosynthesis of NADP. Catalyzes specifically the phosphorylation on 2'-hydroxyl of the adenosine moiety of NAD to yield NADP. The sequence is that of NAD kinase from Neisseria meningitidis serogroup C (strain 053442).